The following is a 563-amino-acid chain: (-)-germacrene D synthase (563 aa).

The stretch at 44–71 forms a coiled coil; that stretch reads TEITAAEKEELEKQKEKVKNLLDQTPND. Residues D314 and D318 each coordinate Mn(2+). The DDXXD motif signature appears at 314-318; it reads DDIYD. 2 homodimerization regions span residues 320-326 and 392-429; these read YGSLDEL and EAEWCFSKYFPTMEEYMKQALVSGAYMMLSTTSLVGME. 2 residues coordinate Mn(2+): D459 and E467.

The protein belongs to the terpene synthase family. In terms of assembly, homodimer. The cofactor is Mn(2+). Mg(2+) is required as a cofactor. Expressed in peltate glandular trichomes. Present at low levels in flowers, leaves and stems.

The catalysed reaction is (2E,6E)-farnesyl diphosphate = (-)-germacrene D + diphosphate. It participates in secondary metabolite biosynthesis; terpenoid biosynthesis. Its function is as follows. Involved in the biosynthesis of phenolic sesquiterpenes natural products. Sesquiterpene synthase that catalyzes mainly the formation of (-)-germacrene D and minor amounts of other sesquiterpenes (e.g. bicyclo-germacrene) from farnesyl diphosphate (FPP). Also triggers moderate amounts formation of myrcene, limonene, terpinolene and linalool in the presence of geranyl diphosphate (GPP). The sequence is that of (-)-germacrene D synthase from Origanum vulgare (Wild marjoram).